Reading from the N-terminus, the 158-residue chain is SsrA-binding protein (158 aa).

It belongs to the SmpB family.

The protein localises to the cytoplasm. Its function is as follows. Required for rescue of stalled ribosomes mediated by trans-translation. Binds to transfer-messenger RNA (tmRNA), required for stable association of tmRNA with ribosomes. tmRNA and SmpB together mimic tRNA shape, replacing the anticodon stem-loop with SmpB. tmRNA is encoded by the ssrA gene; the 2 termini fold to resemble tRNA(Ala) and it encodes a 'tag peptide', a short internal open reading frame. During trans-translation Ala-aminoacylated tmRNA acts like a tRNA, entering the A-site of stalled ribosomes, displacing the stalled mRNA. The ribosome then switches to translate the ORF on the tmRNA; the nascent peptide is terminated with the 'tag peptide' encoded by the tmRNA and targeted for degradation. The ribosome is freed to recommence translation, which seems to be the essential function of trans-translation. The sequence is that of SsrA-binding protein from Symbiobacterium thermophilum (strain DSM 24528 / JCM 14929 / IAM 14863 / T).